Here is a 398-residue protein sequence, read N- to C-terminus: Meiotically up-regulated gene 126 protein (398 aa).

Disordered regions lie at residues 30 to 81 (EEME…QRHR) and 119 to 260 (FESD…NSNS). Polar residues-rich tracts occupy residues 119 to 135 (FESDQQESHTGQANFPT) and 183 to 199 (VQENPQAYSKVTQQEPQ). Residues 210–222 (QANQQETSSNQEE) show a composition bias toward low complexity. Positions 224 to 236 (SFDRQETQDDKQK) are enriched in basic and acidic residues. Positions 248 to 260 (RNRNQATITNSNS) are enriched in polar residues. A run of 4 helical transmembrane segments spans residues 269-289 (IFVISLLGYGVYLLAFLDLIE), 305-325 (IFLWCLFGVLMIARGLIYLAL), 341-361 (GACFWVYACIFFLTRVFCFLI), and 373-393 (LEIYSIFAAINVYIIELGAIY).

It is found in the membrane. In terms of biological role, has a role in meiosis. This is Meiotically up-regulated gene 126 protein (mug126) from Schizosaccharomyces pombe (strain 972 / ATCC 24843) (Fission yeast).